Reading from the N-terminus, the 750-residue chain is 3-isopropylmalate dehydratase (750 aa).

Residues cysteine 353, cysteine 413, and cysteine 416 each contribute to the [4Fe-4S] cluster site. The disordered stretch occupies residues 492–524 (KYDGSPEVFKSTQDTTPAVKPPQPASDSSSSGG).

Belongs to the aconitase/IPM isomerase family. In terms of assembly, monomer. Requires [4Fe-4S] cluster as cofactor.

The catalysed reaction is (2R,3S)-3-isopropylmalate = (2S)-2-isopropylmalate. It functions in the pathway amino-acid biosynthesis; L-leucine biosynthesis; L-leucine from 3-methyl-2-oxobutanoate: step 2/4. Functionally, catalyzes the isomerization between 2-isopropylmalate and 3-isopropylmalate, via the formation of 2-isopropylmaleate. The chain is 3-isopropylmalate dehydratase (LEU1) from Rhizopus niveus.